The chain runs to 146 residues: 3-dehydroquinate dehydratase (146 aa).

Tyr-23 serves as the catalytic Proton acceptor. The substrate site is built by Asn-74, His-80, and Asp-87. The active-site Proton donor is the His-100. Substrate-binding positions include 101 to 102 and Arg-111; that span reads IS.

The protein belongs to the type-II 3-dehydroquinase family. As to quaternary structure, homododecamer.

It catalyses the reaction 3-dehydroquinate = 3-dehydroshikimate + H2O. Its pathway is metabolic intermediate biosynthesis; chorismate biosynthesis; chorismate from D-erythrose 4-phosphate and phosphoenolpyruvate: step 3/7. Catalyzes a trans-dehydration via an enolate intermediate. This chain is 3-dehydroquinate dehydratase, found in Bacillus cereus (strain AH820).